A 261-amino-acid polypeptide reads, in one-letter code: Small ribosomal subunit protein uS2 (261 aa).

At S2 the chain carries N-acetylserine. Residues 212-261 (QNAAEEAKAEETEEAPAAEAETEWTGETDDVDWADSGATPAAEDAAASNW) form a disordered region. The span at 222–244 (ETEEAPAAEAETEWTGETDDVDW) shows a compositional bias: acidic residues.

This sequence belongs to the universal ribosomal protein uS2 family. Component of the small ribosomal subunit. Mature ribosomes consist of a small (40S) and a large (60S) subunit. The 40S subunit contains about 33 different proteins and 1 molecule of RNA (18S). The 60S subunit contains about 49 different proteins and 3 molecules of RNA (25S, 5.8S and 5S). Interacts with RPS21.

The protein localises to the cytoplasm. Required for the assembly and/or stability of the 40S ribosomal subunit. Required for the processing of the 20S rRNA-precursor to mature 18S rRNA in a late step of the maturation of 40S ribosomal subunits. This Candida tropicalis (Yeast) protein is Small ribosomal subunit protein uS2.